A 302-amino-acid chain; its full sequence is Phospho-N-acetylmuramoyl-pentapeptide-transferase (302 aa).

9 consecutive transmembrane segments (helical) span residues 1–21, 42–62, 68–88, 123–143, 154–174, 178–198, 204–224, 229–249, and 279–299; these read MIAANFLLNLFLYPILIKLFR, GTPTMGGILFVLTGFLFGMIS, VLLGMFLFFLIGFLDDFLSVV, FFGFTIEMGKWYYLFALLVIV, GLDGLAGWIYVSGSIPYWFFL, GVSEDILLILGAGVLAFLVFN, IFMGDTGSITLGGVLGTVSVL, FYLVLFFLIPVIETLSVILQV, and IVAVFTVFNLISSLVVLEIFG.

This sequence belongs to the glycosyltransferase 4 family. MraY subfamily. It depends on Mg(2+) as a cofactor.

It is found in the cell inner membrane. It carries out the reaction UDP-N-acetyl-alpha-D-muramoyl-L-alanyl-gamma-D-glutamyl-meso-2,6-diaminopimeloyl-D-alanyl-D-alanine + di-trans,octa-cis-undecaprenyl phosphate = di-trans,octa-cis-undecaprenyl diphospho-N-acetyl-alpha-D-muramoyl-L-alanyl-D-glutamyl-meso-2,6-diaminopimeloyl-D-alanyl-D-alanine + UMP. It participates in cell wall biogenesis; peptidoglycan biosynthesis. In terms of biological role, catalyzes the initial step of the lipid cycle reactions in the biosynthesis of the cell wall peptidoglycan: transfers peptidoglycan precursor phospho-MurNAc-pentapeptide from UDP-MurNAc-pentapeptide onto the lipid carrier undecaprenyl phosphate, yielding undecaprenyl-pyrophosphoryl-MurNAc-pentapeptide, known as lipid I. This Thermotoga petrophila (strain ATCC BAA-488 / DSM 13995 / JCM 10881 / RKU-1) protein is Phospho-N-acetylmuramoyl-pentapeptide-transferase.